Reading from the N-terminus, the 309-residue chain is Homoserine kinase (309 aa).

Position 91–101 (91–101 (PIGSGLGSSAC)) interacts with ATP.

Belongs to the GHMP kinase family. Homoserine kinase subfamily.

Its subcellular location is the cytoplasm. It catalyses the reaction L-homoserine + ATP = O-phospho-L-homoserine + ADP + H(+). It functions in the pathway amino-acid biosynthesis; L-threonine biosynthesis; L-threonine from L-aspartate: step 4/5. In terms of biological role, catalyzes the ATP-dependent phosphorylation of L-homoserine to L-homoserine phosphate. This is Homoserine kinase from Escherichia fergusonii (strain ATCC 35469 / DSM 13698 / CCUG 18766 / IAM 14443 / JCM 21226 / LMG 7866 / NBRC 102419 / NCTC 12128 / CDC 0568-73).